Here is a 417-residue protein sequence, read N- to C-terminus: Methyltransferase/ribosomally synthesized cyclic peptide omphalotin A precursor ophMA (417 aa).

Positions 1–251 are methyltransferase domain; sequence METSTQTKAG…GVSTFYIPPK (251 aa). Residues R72, Y76, and Y98 contribute to the active site. S-adenosyl-L-methionine contacts are provided by Y98, H100, V103, A130, Q172, A213, S244, and T245. The interval 252–378 is clasp domain; the sequence is ARKASNLDII…WAIRCAMKNM (127 aa). Positions 379–399 are precursor leader; it reads PSSLLDAARESGEEASQNGFP. N-methylvaline occurs at positions 401, 403, and 404. G405 is subject to N-methylglycine. N-methylvaline is present on V406. I407 carries the post-translational modification N-methylisoleucine. G408 carries the post-translational modification N-methylglycine. Residue I410 is modified to N-methylisoleucine. An N-methylglycine modification is found at G411. V413 carries the post-translational modification N-methylvaline.

It in the N-terminal section; belongs to the precorrin methyltransferase family. As to quaternary structure, homodimer. In terms of processing, ophMA automethylates at Val-401, Val-403, Val-404, Gly-405, Val-406, Ile-407, Gly-408, Ile-410, Gly-411 and Val-413 before being processed by the prolyloligopeptidase ophP which likely forms a peptidyl ester upon removal of the follower propeptide, which then undergoes macrocyclization with the N-terminus of the modified core peptide. Peptide backbone alpha-N-methylations change the physicochemical properties of amide bonds to provide structural constraints and other favorable characteristics including biological membrane permeability to peptides.

Its pathway is mycotoxin biosynthesis. Functionally, fusion protein of the methyltransferase ophM and the omphalotin core peptide; part of the gene cluster that mediates the biosynthesis of omphalotin A, a highly methylated cyclic dodecapeptide with nematodicidal activity. Omphalotin A derives from the C-terminus of the ophMA protein, and it is the ophMA protein that methylates its own C-terminus using S-adenosyl methionine (SAM). The C-terminus is subsequently cleaved off and macrocyclized by the prolyloligopeptidase ophP to give the final product. The protein is Methyltransferase/ribosomally synthesized cyclic peptide omphalotin A precursor ophMA of Omphalotus olearius (Jack o'lantern).